The primary structure comprises 666 residues: N-acetylgalactosaminyltransferase 6 (666 aa).

The Cytoplasmic portion of the chain corresponds to 1 to 11 (MRRPNLKWIVK). The chain crosses the membrane as a helical; Signal-anchor for type II membrane protein span at residues 12–31 (ASLLLLISLTLFVLITSWIS). The Lumenal segment spans residues 32 to 666 (STPYTNKPVH…NYSQDLVLSL (635 aa)). Residues 90 to 126 (EPVEEEVDNPHPADDEPQQQPQEELQMAAPADASVKK) are disordered. The segment covering 107 to 120 (QQQPQEELQMAAPA) has biased composition (low complexity). A glycan (N-linked (GlcNAc...) asparagine) is linked at Asn-181. Cystine bridges form between Cys-192-Cys-421, Cys-412-Cys-491, Cys-531-Cys-548, Cys-577-Cys-594, and Cys-621-Cys-636. The catalytic subdomain A stretch occupies residues 201–311 (LPTVSVIIIF…YNWLPPLLEP (111 aa)). Substrate-binding residues include Asp-242 and Arg-272. An N-linked (GlcNAc...) asparagine glycan is attached at Asn-285. Residue Asp-295 participates in Mn(2+) binding. Ser-296 is a binding site for substrate. His-297 contacts Mn(2+). Residues 367–429 (PFKSPIMAGG…PCSRIGHIYR (63 aa)) form a catalytic subdomain B region. Substrate is bound at residue Trp-398. His-426 lines the Mn(2+) pocket. Arg-429 is a substrate binding site. The Ricin B-type lectin domain occupies 518-648 (AMGALQNVGN…DNRFQQWNFG (131 aa)). 2 N-linked (GlcNAc...) asparagine glycosylation sites follow: Asn-651 and Asn-657.

It belongs to the glycosyltransferase 2 family. GalNAc-T subfamily. Mn(2+) serves as cofactor. In terms of tissue distribution, expressed during oogenesis, in the somatically derived follicle cells that surround the developing oocyte, which are involved in the maturation of the oocyte and construction of the egg shell, as well as playing a role in subsequent embryonic pattern formation. Expressed in the salivary glands from embryonic stage 12 onwards, becoming stronger at stage 13. During embryonic stages 12-13, also expressed in the posterior midgut and hindgut. During embryonic stages 14-15, expression continues in the hindgut. Expression is detected in the epidermis and antennomaxillary complex during embryonic stages 16-17. In third instar larvae, ubiquitously expressed in wing, eye-antennal, leg and haltere imaginal disks.

The protein resides in the golgi apparatus membrane. It carries out the reaction L-seryl-[protein] + UDP-N-acetyl-alpha-D-galactosamine = a 3-O-[N-acetyl-alpha-D-galactosaminyl]-L-seryl-[protein] + UDP + H(+). The enzyme catalyses L-threonyl-[protein] + UDP-N-acetyl-alpha-D-galactosamine = a 3-O-[N-acetyl-alpha-D-galactosaminyl]-L-threonyl-[protein] + UDP + H(+). It participates in protein modification; protein glycosylation. Functionally, glycopeptide transferase involved in O-linked oligosaccharide biosynthesis, which catalyzes the transfer of an N-acetyl-D-galactosamine residue to an already glycosylated peptide. In contrast to other proteins of the family, it does not act as a peptide transferase that transfers GalNAc onto serine or threonine residue on the protein receptor, but instead requires the prior addition of a GalNAc on a peptide before adding additional GalNAc moieties. Some peptide transferase activity is however not excluded, considering that its appropriate peptide substrate may remain unidentified. Prefers the diglycosylated Muc5AC-3/13 as substrate. Might have a role in protein O-glycosylation in the Golgi and thereby in establishing and/or maintaining a proper secretory apparatus structure. This is N-acetylgalactosaminyltransferase 6 from Drosophila melanogaster (Fruit fly).